The chain runs to 348 residues: MDIKEALNRIVGQLDLTTEEMQAVMRQIMTGQCTDAQVGAFLMGMRMKSETIDEIVGAVQVMRELAAPVRFDTDKLVDTCGTGGDGMNIFNVSTAASFVVAAAGGKVAKHGNRAVSGKSGSADLLEAAGVFLDLTPEQVARSVDTVGVGFMFAPAHHGAMKYAAGPRRELGLRTLFNILGPMANPAGVRHQVLGVFSKALCRPMAEVLSRLGSKHVLVVHAQDGLDEISLAAPTHVAELKDGEIREYSIQPEDFGIKSQSLIGLNVEDAQGSLALIRDALGRRKSENGQKAADMIVLNAGAALYAADVATTLKQGVEMAHDALCSGIARDKLEELVSFTAVFKQENQK.

5-phospho-alpha-D-ribose 1-diphosphate-binding positions include glycine 81, 84–85, 91–94, 109–117, and serine 121; these read GD, NVST, and KHGNRAVSG. Glycine 81 lines the anthranilate pocket. Serine 93 is a binding site for Mg(2+). Position 112 (asparagine 112) interacts with anthranilate. Anthranilate is bound at residue arginine 167. Positions 226 and 227 each coordinate Mg(2+).

Belongs to the anthranilate phosphoribosyltransferase family. In terms of assembly, homodimer. The cofactor is Mg(2+).

It catalyses the reaction N-(5-phospho-beta-D-ribosyl)anthranilate + diphosphate = 5-phospho-alpha-D-ribose 1-diphosphate + anthranilate. The protein operates within amino-acid biosynthesis; L-tryptophan biosynthesis; L-tryptophan from chorismate: step 2/5. Its function is as follows. Catalyzes the transfer of the phosphoribosyl group of 5-phosphorylribose-1-pyrophosphate (PRPP) to anthranilate to yield N-(5'-phosphoribosyl)-anthranilate (PRA). In Stutzerimonas stutzeri (strain A1501) (Pseudomonas stutzeri), this protein is Anthranilate phosphoribosyltransferase.